Consider the following 450-residue polypeptide: WD repeat-containing protein ATCSA-1 (450 aa).

WD repeat units lie at residues 41-81, 101-141, 148-185, and 188-228; these read PHRG…DYEA, GHKY…AVVD, VYRT…FSHT, and GHRD…CFRV. The interval 269–298 is disordered; the sequence is LQSKQTGSQSVKGSSSAKASVEKSRQKRIH. The span at 271 to 287 shows a compositional bias: low complexity; the sequence is SKQTGSQSVKGSSSAKA. WD repeat units follow at residues 310–349 and 397–436; these read AHYG…NTLV and GHYE…EDEM.

In terms of assembly, interacts with DDB1A. In terms of tissue distribution, expressed in roots, leaves, stems, flowers and siliques.

The protein resides in the nucleus. In terms of biological role, involved in UV-B tolerance and genome integrity. In association with DDB2, is necessary for repair of UV-B-induced DNA lesions. The protein is WD repeat-containing protein ATCSA-1 of Arabidopsis thaliana (Mouse-ear cress).